The following is a 487-amino-acid chain: Keratin, type I cytoskeletal 12 (487 aa).

A head region spans residues 1–118 (MSLSVCTSAL…GNDGGLLSGS (118 aa)). Residues 119–154 (EKETMQNLNDRLASYLGKVRSLEEANAELENKIREW) form a coil 1A region. In terms of domain architecture, IF rod spans 119-433 (EKETMQNLND…RLLEGDSQGD (315 aa)). The tract at residues 158-175 (RRTRDAGSQSDYSKYYPL) is linker 1. The tract at residues 176-267 (IEDLKNKIVS…KNHEEELQSF (92 aa)) is coil 1B. Residues 268–290 (QAGGPGEVNVEMDAAPGVDLTKV) are linker 12. The interval 291–428 (LNEMRAQYEA…IETYRRLLEG (138 aa)) is coil 2. The disordered stretch occupies residues 428–461 (GDSQGDGFDESSSLSVSKPQTPSVDSSKDPNKTR). The tail stretch occupies residues 429–487 (DSQGDGFDESSSLSVSKPQTPSVDSSKDPNKTRKIKTVVQEIVNGEVVSSQVQELEEEM). The span at 437–452 (ESSSLSVSKPQTPSVD) shows a compositional bias: polar residues.

It belongs to the intermediate filament family. In terms of assembly, heterotetramer of two type I and two type II keratins. Keratin-3 associates with keratin-12. Expressed in the corneal epithelium (at protein level). Also expressed in the suprabasal limbal epithelium of the cornea (at protein level).

Functionally, involved in corneal epithelium organization, integrity and corneal keratin expression. The sequence is that of Keratin, type I cytoskeletal 12 (Krt12) from Mus musculus (Mouse).